A 593-amino-acid polypeptide reads, in one-letter code: Autophagy-related protein 22-2 (593 aa).

A helical membrane pass occupies residues 42-62 (YGVAAEVFAVCGVGSFLPLTL). Asparagine 90 is a glycosylation site (N-linked (GlcNAc...) asparagine). The next 3 helical transmembrane spans lie at 112–132 (SFAM…LVSF), 159–179 (LFML…VIGV), and 181–201 (CLGS…ANDP). Residues 228-261 (SWTDEEDTGDHAGPAGSKKAVEPEKASSSTSPEL) form a disordered region. The next 4 membrane-spanning stretches (helical) occupy residues 271 to 291 (GVGL…LLLF), 305 to 325 (LPLR…TVVC), 377 to 397 (VVVF…VSGT), and 415 to 435 (LLSI…PIVA). Asparagine 443 is a glycosylation site (N-linked (GlcNAc...) asparagine). A run of 4 helical transmembrane segments spans residues 448 to 468 (LCIA…IPFI), 480 to 500 (WEIF…ASYC), 525 to 545 (KGSS…TGSV), and 548 to 568 (GFIF…LVNA).

It belongs to the ATG22 family.

It localises to the vacuole membrane. In terms of biological role, vacuolar effluxer which mediate the efflux of amino acids resulting from autophagic degradation. The release of autophagic amino acids allows the maintenance of protein synthesis and viability during nitrogen starvation. The polypeptide is Autophagy-related protein 22-2 (atg22-2) (Emericella nidulans (strain FGSC A4 / ATCC 38163 / CBS 112.46 / NRRL 194 / M139) (Aspergillus nidulans)).